The following is a 153-amino-acid chain: Superoxide dismutase [Cu-Zn] (153 aa).

Cu cation is bound by residues H45 and H47. Residue T53 is modified to Phosphothreonine. A disulfide bridge links C56 with C145. Phosphoserine is present on S59. H62 provides a ligand contact to Cu cation. Residues H62, H70, H79, and D82 each coordinate Zn(2+). H119 contributes to the Cu cation binding site.

Belongs to the Cu-Zn superoxide dismutase family. As to quaternary structure, homodimer. It depends on Cu cation as a cofactor. Zn(2+) serves as cofactor.

Its subcellular location is the cytoplasm. The enzyme catalyses 2 superoxide + 2 H(+) = H2O2 + O2. In terms of biological role, destroys radicals which are normally produced within the cells and which are toxic to biological systems. The chain is Superoxide dismutase [Cu-Zn] from Drosophila melanogaster (Fruit fly).